A 569-amino-acid polypeptide reads, in one-letter code: uncharacterized protein (569 aa).

The first 22 residues, 1 to 22, serve as a signal peptide directing secretion; the sequence is MSLLVKAALILKCASMLQGVSA. The tract at residues 498-541 is disordered; it reads RETSILDSTNTTSTNATNTTTTTSSSSTASSSASASSSTSATSG. The span at 505-540 shows a compositional bias: low complexity; the sequence is STNTTSTNATNTTTTTSSSSTASSSASASSSTSATS.

It localises to the secreted. The protein localises to the cell surface. This is an uncharacterized protein from Schizosaccharomyces pombe (strain 972 / ATCC 24843) (Fission yeast).